Here is a 221-residue protein sequence, read N- to C-terminus: ATP-dependent Clp protease proteolytic subunit 3 (221 aa).

Serine 118 acts as the Nucleophile in catalysis. The active site involves histidine 143.

This sequence belongs to the peptidase S14 family. As to quaternary structure, fourteen ClpP subunits assemble into 2 heptameric rings which stack back to back to give a disk-like structure with a central cavity, resembling the structure of eukaryotic proteasomes.

It is found in the cytoplasm. The enzyme catalyses Hydrolysis of proteins to small peptides in the presence of ATP and magnesium. alpha-casein is the usual test substrate. In the absence of ATP, only oligopeptides shorter than five residues are hydrolyzed (such as succinyl-Leu-Tyr-|-NHMec, and Leu-Tyr-Leu-|-Tyr-Trp, in which cleavage of the -Tyr-|-Leu- and -Tyr-|-Trp bonds also occurs).. Functionally, cleaves peptides in various proteins in a process that requires ATP hydrolysis. Has a chymotrypsin-like activity. Plays a major role in the degradation of misfolded proteins. This is ATP-dependent Clp protease proteolytic subunit 3 from Nocardia farcinica (strain IFM 10152).